Consider the following 415-residue polypeptide: Multifunctional CCA protein (415 aa).

Residues glycine 8 and arginine 11 each contribute to the ATP site. Positions 8 and 11 each coordinate CTP. The Mg(2+) site is built by aspartate 21 and aspartate 23. ATP contacts are provided by arginine 91, arginine 143, and arginine 146. Residues arginine 91, arginine 143, and arginine 146 each contribute to the CTP site. Residues 232–333 (TGVHVMMVID…VRLLERCDAL (102 aa)) enclose the HD domain.

This sequence belongs to the tRNA nucleotidyltransferase/poly(A) polymerase family. Bacterial CCA-adding enzyme type 1 subfamily. Monomer. Can also form homodimers and oligomers. It depends on Mg(2+) as a cofactor. Ni(2+) serves as cofactor.

The enzyme catalyses a tRNA precursor + 2 CTP + ATP = a tRNA with a 3' CCA end + 3 diphosphate. It carries out the reaction a tRNA with a 3' CCA end + 2 CTP + ATP = a tRNA with a 3' CCACCA end + 3 diphosphate. Its function is as follows. Catalyzes the addition and repair of the essential 3'-terminal CCA sequence in tRNAs without using a nucleic acid template. Adds these three nucleotides in the order of C, C, and A to the tRNA nucleotide-73, using CTP and ATP as substrates and producing inorganic pyrophosphate. tRNA 3'-terminal CCA addition is required both for tRNA processing and repair. Also involved in tRNA surveillance by mediating tandem CCA addition to generate a CCACCA at the 3' terminus of unstable tRNAs. While stable tRNAs receive only 3'-terminal CCA, unstable tRNAs are marked with CCACCA and rapidly degraded. The polypeptide is Multifunctional CCA protein (Cupriavidus taiwanensis (strain DSM 17343 / BCRC 17206 / CCUG 44338 / CIP 107171 / LMG 19424 / R1) (Ralstonia taiwanensis (strain LMG 19424))).